A 149-amino-acid polypeptide reads, in one-letter code: Large ribosomal subunit protein uL15 (149 aa).

The interval 1–58 (MKLHNLRPAKGGEVKARKRVGRGYGSGLGHNAGRGRDGQNSRSGGGVRPGFEGGQMPL) is disordered. Composition is skewed to gly residues over residues 22–32 (RGYGSGLGHNA) and 43–53 (SGGGVRPGFEG).

It belongs to the universal ribosomal protein uL15 family. Part of the 50S ribosomal subunit.

In terms of biological role, binds to the 23S rRNA. The sequence is that of Large ribosomal subunit protein uL15 from Finegoldia magna (strain ATCC 29328 / DSM 20472 / WAL 2508) (Peptostreptococcus magnus).